The primary structure comprises 274 residues: Mitochondrial S-adenosylmethionine carrier protein (274 aa).

Solcar repeat units lie at residues 4-77 (PGFV…VKWF), 86-168 (LTPM…LKAL), and 177-265 (VDSW…THSL). 6 helical membrane passes run 5 to 25 (GFVAALVAGGVAGVSVDLILF), 49 to 69 (IYAGVPSAAIGSFPNAAAFFI), 85 to 105 (YLTPMKHMLAASAGEVVACLI), 142 to 162 (RGYKSTVLREIPFSLVQFPLW), 182 to 202 (SAVCGAFAGGFAAAVTTPLDV), and 238 to 258 (FAGVFPRMAAISLGGFIFLGA).

Belongs to the mitochondrial carrier (TC 2.A.29) family. As to expression, widely expressed. Highly expressed in testis, with moderate expression in brain, heart, kidney, lung, skeletal muscle, pancreas, small intestine and liver, and low expression in spleen.

The protein resides in the mitochondrion inner membrane. It carries out the reaction S-adenosyl-L-homocysteine(out) + S-adenosyl-L-methionine(in) = S-adenosyl-L-homocysteine(in) + S-adenosyl-L-methionine(out). Its activity is regulated as follows. Strongly inhibited by tannic acid and Bromocresol Purple. Mitochondrial S-adenosyl-L-methionine/S-adenosyl-L-homocysteine antiporter. Mediates the exchange of cytosolic S-adenosyl-L-methionine, the predominant methyl-group donor for macromolecule methylation processes, for mitochondrial S-adenosylhomocysteine(SAH), a by-product of methylation reactions. This Homo sapiens (Human) protein is Mitochondrial S-adenosylmethionine carrier protein.